The sequence spans 81 residues: Elongation factor 1-beta (81 aa).

The protein belongs to the EF-1-beta/EF-1-delta family.

Promotes the exchange of GDP for GTP in EF-1-alpha/GDP, thus allowing the regeneration of EF-1-alpha/GTP that could then be used to form the ternary complex EF-1-alpha/GTP/AAtRNA. The polypeptide is Elongation factor 1-beta (Nanoarchaeum equitans (strain Kin4-M)).